Reading from the N-terminus, the 222-residue chain is ATP-dependent dethiobiotin synthetase BioD (222 aa).

12 to 17 (DAGKTV) provides a ligand contact to ATP. Mg(2+) is bound at residue T16. Residue K37 is part of the active site. S41 contributes to the substrate binding site. ATP-binding positions include D54, 116-119 (EGAG), 176-177 (VQ), 206-208 (PYL), and E213. Mg(2+) contacts are provided by D54 and E116.

It belongs to the dethiobiotin synthetase family. Homodimer. It depends on Mg(2+) as a cofactor.

It localises to the cytoplasm. The catalysed reaction is (7R,8S)-7,8-diammoniononanoate + CO2 + ATP = (4R,5S)-dethiobiotin + ADP + phosphate + 3 H(+). It participates in cofactor biosynthesis; biotin biosynthesis; biotin from 7,8-diaminononanoate: step 1/2. Its function is as follows. Catalyzes a mechanistically unusual reaction, the ATP-dependent insertion of CO2 between the N7 and N8 nitrogen atoms of 7,8-diaminopelargonic acid (DAPA, also called 7,8-diammoniononanoate) to form a ureido ring. This chain is ATP-dependent dethiobiotin synthetase BioD, found in Idiomarina loihiensis (strain ATCC BAA-735 / DSM 15497 / L2-TR).